The following is a 229-amino-acid chain: ATP synthase subunit a (229 aa).

7 helical membrane-spanning segments follow: residues 24 to 44 (RLCF…LLFC), 45 to 65 (LFDL…FMLF), 83 to 103 (LLFC…CFLC), 117 to 137 (FMDV…SLLC), 143 to 163 (FLRL…FFDF), 177 to 199 (CYFI…LYLL), and 206 to 228 (LQLF…FLLF).

Belongs to the ATPase A chain family. As to quaternary structure, F-type ATPases have 2 components, CF(1) - the catalytic core - and CF(0) - the membrane proton channel. CF(1) has five subunits: alpha(3), beta(3), gamma(1), delta(1), epsilon(1). CF(0) has three main subunits: a, b and c.

The protein localises to the mitochondrion inner membrane. Functionally, mitochondrial membrane ATP synthase (F(1)F(0) ATP synthase or Complex V) produces ATP from ADP in the presence of a proton gradient across the membrane which is generated by electron transport complexes of the respiratory chain. F-type ATPases consist of two structural domains, F(1) - containing the extramembraneous catalytic core and F(0) - containing the membrane proton channel, linked together by a central stalk and a peripheral stalk. During catalysis, ATP synthesis in the catalytic domain of F(1) is coupled via a rotary mechanism of the central stalk subunits to proton translocation. Key component of the proton channel; it may play a direct role in the translocation of protons across the membrane. The polypeptide is ATP synthase subunit a (ATP6) (Trypanosoma brucei brucei).